A 793-amino-acid chain; its full sequence is Protein smoothened (793 aa).

An N-terminal signal peptide occupies residues 1 to 32 (MAAGRPVRGPELAPRRLLQLLLLVLLGGPGRG). Topologically, residues 33-237 (AALSGNVTGP…EAEHQDMHSY (205 aa)) are extracellular. Positions 35–61 (LSGNVTGPGPHSASGSSRRDVPVTSPP) are disordered. Asparagine 38 is a glycosylation site (N-linked (GlcNAc...) asparagine). Intrachain disulfides connect cysteine 68–cysteine 182, cysteine 74–cysteine 138, cysteine 82–cysteine 131, cysteine 122–cysteine 158, and cysteine 151–cysteine 173. One can recognise an FZ domain in the interval 69–185 (GRAAHCEPLR…DHFPEGCPNE (117 aa)). Aspartate 99 is a cholesterol binding site. N-linked (GlcNAc...) asparagine glycosylation occurs at asparagine 192. Disulfide bonds link cysteine 197–cysteine 217, cysteine 221–cysteine 299, and cysteine 318–cysteine 394. Residues 238 to 258 (IAAFGAVTGLCTLFTLATFVA) form a helical membrane-spanning segment. Residues 259–265 (DWRNSNR) are Cytoplasmic-facing. Residues 266–286 (YPAVILFYVNACFFVGSIGWL) form a helical membrane-spanning segment. Topologically, residues 287–318 (AQFMDGARREIVCRADGTMRFGEPTSSETLSC) are extracellular. Residues 319-339 (VIIFVIVYYALMAGVVWFVVL) traverse the membrane as a helical segment. Over 340 to 362 (TYAWHTSFKALGTTYQPLSGKTS) the chain is Cytoplasmic. The chain crosses the membrane as a helical span at residues 363–383 (YFHLLTWSLPFVLTVAILAVA). Residues 384-406 (QVDGDSVSGICFVGYKNYRYRAG) lie on the Extracellular side of the membrane. Residue tyrosine 398 participates in cholesterol binding. Residues 407–427 (FVLAPIGLVLIVGGYFLIRGV) form a helical membrane-spanning segment. Residues 428–455 (MTLFSIKSNHPGLLSEKAASKINETMLR) lie on the Cytoplasmic side of the membrane. A helical transmembrane segment spans residues 456 to 476 (LGIFGFLAFGFVLITFSCHFY). Over 477-528 (DFFNQAEWERSFRDYVLCQANVTIGLPTKKPIPDCEIKNRPSLLVEKINLFA) the chain is Extracellular. Cysteines 494 and 511 form a disulfide. Asparagine 497 is a glycosylation site (N-linked (GlcNAc...) asparagine). Residues 529–549 (MFGTGIAMSTWVWTKATLLIW) traverse the membrane as a helical segment. The segment at 542–573 (TKATLLIWRRTWCRLTGHSDDEPKRIKKSKMI) is interaction with BBS5 and BBS7. Residues 550–793 (RRTWCRLTGH…AEILDADSDF (244 aa)) are Cytoplasmic-facing. Phosphoserine occurs at positions 560, 578, and 594. The segment at 574 to 657 (AKAFSKRREL…TPVPPEEQAN (84 aa)) is required for interaction with PRKACA. The interaction with DLG5 stretch occupies residues 585–597 (QNPGQELSFSMHT). Phosphothreonine is present on threonine 597. 2 positions are modified to phosphoserine: serine 599 and serine 642. Residues threonine 644 and threonine 648 each carry the phosphothreonine modification. Serine 666 carries the phosphoserine modification. Basic residues predominate over residues 674–684 (GRKKKRRKRKK). The interval 674–703 (GRKKKRRKRKKEVCPLRPAPELHHSAPVPA) is disordered.

The protein belongs to the G-protein coupled receptor Fz/Smo family. As to quaternary structure, homodimer. Interacts (via C-terminus) with protein kinase A catalytic subunit PRKACA; interacts with free PRKACA subunits and the interaction leads to sequestration of PRKACA at the membrane, preventing PRKACA-mediated phosphorylation of GLI transcription factors. Interacts with ARRB2. Interacts with BBS5 and BBS7; the interactions are indicative for the association of SMO with the BBsome complex to facilitate ciliary localization of SMO. Interacts with KIF7, DLG5 and SDCBP. Interacts with GAS8/DRC4. Post-translationally, phosphorylation by GRK kinases is required for interaction with protein kinase A catalytic subunit PRKACA. As to expression, during early somite stages of embryonic development, modestly up-regulated in the cells of the node (at protein level).

It is found in the cell membrane. Its subcellular location is the cell projection. The protein localises to the cilium. Functionally, g protein-coupled receptor which associates with the patched protein (PTCH) to transduce hedgehog protein signaling. Binding of sonic hedgehog (SHH) to its receptor patched prevents inhibition of smoothened (SMO) by patched. When active, SMO binds to and sequesters protein kinase A catalytic subunit PRKACA at the cell membrane, preventing PRKACA-mediated phosphorylation of GLI transcription factors which releases the GLI proteins from PRKACA-mediated inhibition and allows for transcriptional activation of hedgehog pathway target genes. Required for the accumulation of KIF7, GLI2 and GLI3 in the cilia. Interacts with DLG5 at the ciliary base to induce the accumulation of KIF7 and GLI2 at the ciliary tip for GLI2 activation. The sequence is that of Protein smoothened (Smo) from Mus musculus (Mouse).